We begin with the raw amino-acid sequence, 215 residues long: ATP phosphoribosyltransferase (215 aa).

Belongs to the ATP phosphoribosyltransferase family. Short subfamily. Heteromultimer composed of HisG and HisZ subunits.

It localises to the cytoplasm. It catalyses the reaction 1-(5-phospho-beta-D-ribosyl)-ATP + diphosphate = 5-phospho-alpha-D-ribose 1-diphosphate + ATP. Its pathway is amino-acid biosynthesis; L-histidine biosynthesis; L-histidine from 5-phospho-alpha-D-ribose 1-diphosphate: step 1/9. Catalyzes the condensation of ATP and 5-phosphoribose 1-diphosphate to form N'-(5'-phosphoribosyl)-ATP (PR-ATP). Has a crucial role in the pathway because the rate of histidine biosynthesis seems to be controlled primarily by regulation of HisG enzymatic activity. The protein is ATP phosphoribosyltransferase (hisG) of Clostridium acetobutylicum (strain ATCC 824 / DSM 792 / JCM 1419 / IAM 19013 / LMG 5710 / NBRC 13948 / NRRL B-527 / VKM B-1787 / 2291 / W).